A 2245-amino-acid polypeptide reads, in one-letter code: Basic helix-loop-helix domain-containing protein USF3 (2245 aa).

Positions 1 to 28 (MPEMTENETPTKKQHRKKNRETHNAVER) are disordered. In terms of domain architecture, bHLH spans 18-69 (KNRETHNAVERHRKKKINAGINRIGELIPCSPALKQSKNMILDQAFKYITEL). A coiled-coil region spans residues 77-112 (LLNGGNNEQAEEIKKLRKQLEEIQKENGRYIELLKA). 13 disordered regions span residues 271–290 (LHTCLNDQNSSENKNGQENP), 447–470 (SQTPSSAVTPVLNESGTSPTTSNH), 881–900 (SKSKSAEKSSPPSQESVTSE), 906–933 (AAKSKDSTPNLQQETSQDKPPSSLALSD), 1015–1041 (KNPQKSSLSDQMDHPDFSSENPKIVDS), 1164–1238 (PSEA…SITS), 1307–1331 (IPNSQIQEPLLKPSHESRKDSAKRA), 1460–1624 (IKQQ…VSGH), 1636–1664 (LEQQMVSQPSIVTRSSDMTCTPHRPERNR), 1736–1764 (TFKPSGASQQPQSNFEVQSSRNNEIGNPV), 1777–1815 (ISQNTGPPPIDRQKRLSYPPVQSIPTGNGIPSRDSENTC), 1834–1859 (GSQRSLSEHQRNTQCGPSSAIEYNCP), and 1891–2031 (STLN…QPAT). Over residues 273-288 (TCLNDQNSSENKNGQE) the composition is skewed to polar residues. Over residues 881 to 896 (SKSKSAEKSSPPSQES) the composition is skewed to low complexity. Positions 912-925 (STPNLQQETSQDKP) are enriched in polar residues. Polar residues-rich tracts occupy residues 1185-1202 (GTGQAEATPNEFNSQGSI) and 1219-1238 (IKTSNASLQDSTSQPPSITS). The segment covering 1319–1331 (PSHESRKDSAKRA) has biased composition (basic and acidic residues). Residues 1462 to 1478 (QQQQQQQQQQQQQQQQQ) are compositionally biased toward low complexity. Polar residues-rich tracts occupy residues 1501–1520 (SVHSQPHNVHQQRTLQQEVQ) and 1528–1538 (VQGTQTSQLSL). The span at 1560-1569 (QQMQQQMQQH) shows a compositional bias: low complexity. A compositionally biased stretch (polar residues) spans 1570 to 1585 (FGSSQTEKSCENPSTS). A compositionally biased stretch (low complexity) spans 1593–1624 (QNHLNQDIMHQQQDVGSRQQGSGVSSEHVSGH). The segment covering 1636–1654 (LEQQMVSQPSIVTRSSDMT) has biased composition (polar residues). Polar residues-rich tracts occupy residues 1904 to 1923 (GDIQGRNTSPNVSVQKSNPM) and 1998 to 2007 (SGNQRQSTVF).

Its subcellular location is the nucleus. Its function is as follows. Involved in the negative regulation of epithelial-mesenchymal transition, the process by which epithelial cells lose their polarity and adhesion properties to become mesenchymal cells with enhanced migration and invasive properties. This is Basic helix-loop-helix domain-containing protein USF3 from Homo sapiens (Human).